The following is a 218-amino-acid chain: Ras-related protein RABA5e (218 aa).

A GTP-binding site is contributed by 19 to 26 (GDSAVGKS). The short motif at 41 to 49 (SKATIGVEF) is the Effector region element. Residues 67–71 (DTAGQ), 125–128 (NKCD), and 155–156 (SA) contribute to the GTP site. 2 S-geranylgeranyl cysteine lipidation sites follow: C214 and C215. The residue at position 215 (C215) is a Cysteine methyl ester. Residues 216-218 (SST) constitute a propeptide, removed in mature form.

The protein belongs to the small GTPase superfamily. Rab family.

It localises to the cell membrane. Functionally, intracellular vesicle trafficking and protein transport. This is Ras-related protein RABA5e (RABA5E) from Arabidopsis thaliana (Mouse-ear cress).